Consider the following 532-residue polypeptide: Glucose-6-phosphate isomerase (532 aa).

The Proton donor role is filled by Glu-330. Catalysis depends on residues His-359 and Lys-460.

This sequence belongs to the GPI family.

It is found in the cytoplasm. The catalysed reaction is alpha-D-glucose 6-phosphate = beta-D-fructose 6-phosphate. Its pathway is carbohydrate biosynthesis; gluconeogenesis. It participates in carbohydrate degradation; glycolysis; D-glyceraldehyde 3-phosphate and glycerone phosphate from D-glucose: step 2/4. In terms of biological role, catalyzes the reversible isomerization of glucose-6-phosphate to fructose-6-phosphate. This Prochlorococcus marinus (strain MIT 9211) protein is Glucose-6-phosphate isomerase.